We begin with the raw amino-acid sequence, 146 residues long: Anti-sigma F factor (146 aa).

Belongs to the anti-sigma-factor family.

It catalyses the reaction L-seryl-[protein] + ATP = O-phospho-L-seryl-[protein] + ADP + H(+). The enzyme catalyses L-threonyl-[protein] + ATP = O-phospho-L-threonyl-[protein] + ADP + H(+). Its function is as follows. Binds to sigma F and blocks its ability to form an RNA polymerase holoenzyme (E-sigma F). Phosphorylates SpoIIAA on a serine residue. This phosphorylation may enable SpoIIAA to act as an anti-anti-sigma factor that counteracts SpoIIAB and thus releases sigma F from inhibition. This Anoxybacillus flavithermus (strain DSM 21510 / WK1) protein is Anti-sigma F factor.